Reading from the N-terminus, the 181-residue chain is ADP-ribosylation factor 1 (181 aa).

Glycine 2 carries N-myristoyl glycine lipidation. GTP contacts are provided by residues 24-31 (GLDAAGKT), 67-71 (DVGGQ), and 126-129 (NKQD).

Belongs to the small GTPase superfamily. Arf family. In terms of assembly, interacts with AGD7 and GDAP1. GDP-locked form interacts with cytosolic tail of p24 proteins. Interacts with AGD5 at trans-Golgi network. Interacts with A.tumefaciens AK6b.

Its subcellular location is the golgi apparatus. The protein localises to the endosome. It is found in the trans-Golgi network. The protein resides in the early endosome. It catalyses the reaction GTP + H2O = GDP + phosphate + H(+). Activated by AGD7 and AGD10. Functionally, GTP-binding protein involved in protein trafficking; required for the sequence-specific vacuolar sorting route to the lytic vacuole, for the ER-to-Golgi transport and for the Golgi-derived transport to the plasma membrane. Involved in the recruitment of COPI and GDAP1 to membranes. Required for recycling of PIN auxin transporters (e.g. PIN1 and PIN2) in a fungal toxin brefeldin A (BFA)-dependent manner. Involved in various auxin-dependent developmental processes. The protein is ADP-ribosylation factor 1 of Arabidopsis thaliana (Mouse-ear cress).